A 999-amino-acid polypeptide reads, in one-letter code: Hypoxia up-regulated protein 1 (999 aa).

A signal peptide spans 1 to 32 (MADKVRRQRPRRRVCWALVAVLLADLLALSDT). Residues Asn-155, Asn-222, and Asn-515 are each glycosylated (N-linked (GlcNAc...) asparagine). Phosphoserine is present on Ser-567. A disordered region spans residues 578–694 (GNTISSLFGG…KKQKPARKRR (117 aa)). Asn-596 is a glycosylation site (N-linked (GlcNAc...) asparagine). Composition is skewed to basic and acidic residues over residues 611 to 626 (GSKDEPGEQVELKEEA) and 641 to 672 (PKGDATPEGEKATEKENGDKSEAQKPSEKAEA). Residues Asn-830, Asn-862, and Asn-869 are each glycosylated (N-linked (GlcNAc...) asparagine). Residue Lys-883 is modified to N6-acetyllysine. Residues 909 to 999 (AKFTKPRPRP…QKRPLKNDEL (91 aa)) are disordered. N-linked (GlcNAc...) asparagine glycans are attached at residues Asn-922 and Asn-931. The Prevents secretion from ER signature appears at 996-999 (NDEL).

This sequence belongs to the heat shock protein 70 family. Part of a large chaperone multiprotein complex comprising DNAJB11, HSP90B1, HSPA5, HYOU, PDIA2, PDIA4, PDIA6, PPIB, SDF2L1, UGGT1 and very small amounts of ERP29, but not, or at very low levels, CALR nor CANX. As to expression, highly expressed in tissues that contain well-developed endoplasmic reticulum and synthesize large amounts of secretory proteins. Highly expressed in liver and pancreas and lower expression in brain and kidney. Also expressed in macrophages within aortic atherosclerotic plaques, and in breast cancers.

The protein resides in the endoplasmic reticulum lumen. Its function is as follows. Has a pivotal role in cytoprotective cellular mechanisms triggered by oxygen deprivation. Promotes HSPA5/BiP-mediated ATP nucleotide exchange and thereby activates the unfolded protein response (UPR) pathway in the presence of endoplasmic reticulum stress. May play a role as a molecular chaperone and participate in protein folding. The polypeptide is Hypoxia up-regulated protein 1 (HYOU1) (Homo sapiens (Human)).